The following is a 124-amino-acid chain: Aspartate 1-decarboxylase (124 aa).

S25 serves as the catalytic Schiff-base intermediate with substrate; via pyruvic acid. S25 carries the pyruvic acid (Ser) modification. T57 contacts substrate. Y58 acts as the Proton donor in catalysis. Position 73–75 (73–75 (GAA)) interacts with substrate.

Belongs to the PanD family. In terms of assembly, heterooctamer of four alpha and four beta subunits. Pyruvate is required as a cofactor. Is synthesized initially as an inactive proenzyme, which is activated by self-cleavage at a specific serine bond to produce a beta-subunit with a hydroxyl group at its C-terminus and an alpha-subunit with a pyruvoyl group at its N-terminus.

It is found in the cytoplasm. It catalyses the reaction L-aspartate + H(+) = beta-alanine + CO2. It functions in the pathway cofactor biosynthesis; (R)-pantothenate biosynthesis; beta-alanine from L-aspartate: step 1/1. Its function is as follows. Catalyzes the pyruvoyl-dependent decarboxylation of aspartate to produce beta-alanine. This is Aspartate 1-decarboxylase from Syntrophobacter fumaroxidans (strain DSM 10017 / MPOB).